A 247-amino-acid chain; its full sequence is Histone acetyltransferase MCC1 (247 aa).

An N-acetyltransferase domain is found at 25 to 198; that stretch reads IHYRPINPND…DAFLFVYFIN (174 aa).

It belongs to the acetyltransferase family.

It catalyses the reaction L-lysyl-[protein] + acetyl-CoA = N(6)-acetyl-L-lysyl-[protein] + CoA + H(+). Functionally, histone acetyltransferase that probably regulates acetylation status of histone H3 during meiosis. Histone acetylation may influence recombination and chromosome segregation. This Arabidopsis thaliana (Mouse-ear cress) protein is Histone acetyltransferase MCC1 (MCC1).